A 137-amino-acid polypeptide reads, in one-letter code: Small ribosomal subunit protein uS12 (137 aa).

Over residues Met-31–Pro-41 the composition is skewed to polar residues. The interval Met-31–Lys-57 is disordered. 3-methylthioaspartic acid is present on Asp-102.

This sequence belongs to the universal ribosomal protein uS12 family. In terms of assembly, part of the 30S ribosomal subunit. Contacts proteins S8 and S17. May interact with IF1 in the 30S initiation complex.

Its function is as follows. With S4 and S5 plays an important role in translational accuracy. Functionally, interacts with and stabilizes bases of the 16S rRNA that are involved in tRNA selection in the A site and with the mRNA backbone. Located at the interface of the 30S and 50S subunits, it traverses the body of the 30S subunit contacting proteins on the other side and probably holding the rRNA structure together. The combined cluster of proteins S8, S12 and S17 appears to hold together the shoulder and platform of the 30S subunit. The chain is Small ribosomal subunit protein uS12 from Oenococcus oeni (strain ATCC BAA-331 / PSU-1).